Consider the following 545-residue polypeptide: Chaperonin GroEL (545 aa).

ATP-binding positions include 29–32 (TMGP), Lys50, 86–90 (DGTTT), Gly414, 477–479 (DAA), and Asp493.

Belongs to the chaperonin (HSP60) family. In terms of assembly, forms a cylinder of 14 subunits composed of two heptameric rings stacked back-to-back. Interacts with the co-chaperonin GroES.

The protein resides in the cytoplasm. The catalysed reaction is ATP + H2O + a folded polypeptide = ADP + phosphate + an unfolded polypeptide.. Its function is as follows. Together with its co-chaperonin GroES, plays an essential role in assisting protein folding. The GroEL-GroES system forms a nano-cage that allows encapsulation of the non-native substrate proteins and provides a physical environment optimized to promote and accelerate protein folding. The chain is Chaperonin GroEL from Campylobacter jejuni subsp. jejuni serotype O:2 (strain ATCC 700819 / NCTC 11168).